Reading from the N-terminus, the 365-residue chain is Chorismate synthase (365 aa).

Arg-46 is a binding site for NADP(+). FMN is bound by residues 123-125 (RSS), 241-242 (NG), Gly-281, 296-300 (KPTPS), and Arg-322.

This sequence belongs to the chorismate synthase family. Homotetramer. The cofactor is FMNH2.

It catalyses the reaction 5-O-(1-carboxyvinyl)-3-phosphoshikimate = chorismate + phosphate. It functions in the pathway metabolic intermediate biosynthesis; chorismate biosynthesis; chorismate from D-erythrose 4-phosphate and phosphoenolpyruvate: step 7/7. Catalyzes the anti-1,4-elimination of the C-3 phosphate and the C-6 proR hydrogen from 5-enolpyruvylshikimate-3-phosphate (EPSP) to yield chorismate, which is the branch point compound that serves as the starting substrate for the three terminal pathways of aromatic amino acid biosynthesis. This reaction introduces a second double bond into the aromatic ring system. This is Chorismate synthase from Helicobacter pylori (strain ATCC 700392 / 26695) (Campylobacter pylori).